The chain runs to 224 residues: Urease accessory protein UreF (224 aa).

The protein belongs to the UreF family. UreD, UreF and UreG form a complex that acts as a GTP-hydrolysis-dependent molecular chaperone, activating the urease apoprotein by helping to assemble the nickel containing metallocenter of UreC. The UreE protein probably delivers the nickel.

It localises to the cytoplasm. Its function is as follows. Required for maturation of urease via the functional incorporation of the urease nickel metallocenter. The protein is Urease accessory protein UreF of Pseudomonas savastanoi pv. phaseolicola (strain 1448A / Race 6) (Pseudomonas syringae pv. phaseolicola (strain 1448A / Race 6)).